Reading from the N-terminus, the 506-residue chain is UDP-N-acetylglucosamine--peptide N-acetylglucosaminyltransferase GtfA subunit (506 aa).

16-19 contributes to the UDP binding site; that stretch reads GVEY. Histidine 241 contributes to the N-acetyl-D-glucosamine binding site. 384 to 385 contacts UDP; the sequence is HK. Residue 404–407 coordinates N-acetyl-D-glucosamine; that stretch reads EGFG.

The protein belongs to the glycosyltransferase group 1 family. Glycosyltransferase 4 subfamily. In terms of assembly, interacts with stabilizing protein GtfB (Gtf2), probably as a heterotetramer with 2 subunits each of GtfA and GtfB, part of the accessory SecA2/SecY2 protein translocation apparatus.

The protein resides in the cytoplasm. It is found in the cell membrane. It carries out the reaction L-seryl-[protein] + UDP-N-acetyl-alpha-D-glucosamine = 3-O-[N-acetyl-alpha-D-glucosaminyl]-L-seryl-[protein] + UDP + H(+). The protein operates within protein modification; protein glycosylation. Its function is as follows. Required for polymorphic O-glycosylation of the serine-rich repeat protein Srr2. Catalyzes the first step in glycosylation by transferring N-acetylglucosamine from UDP-GlcNAc to serine residues of Srr2. Part of the accessory SecA2/SecY2 system specifically required to export serine-rich repeat proteins, probably Srr2 in this organism. The GtfA-GtfB (Gtf1-Gtf2 in this bacteria) complex adds GlcNAc from UDP-GlcNAc to Srr2 substrate. This subunit has low glycosyltransferase activity; GtfB enhances glycosyltransferase activity in vitro. Upon expression in S.parasanguis GtfA/GtfB restores expression of serine-rich repeat protein Fap1 and complements a biofilm formation defect. The protein is UDP-N-acetylglucosamine--peptide N-acetylglucosaminyltransferase GtfA subunit of Streptococcus agalactiae.